The following is a 504-amino-acid chain: ATP synthase subunit beta (504 aa).

181–188 (GGAGVGKT) contacts ATP.

This sequence belongs to the ATPase alpha/beta chains family. F-type ATPases have 2 components, CF(1) - the catalytic core - and CF(0) - the membrane proton channel. CF(1) has five subunits: alpha(3), beta(3), gamma(1), delta(1), epsilon(1). CF(0) has three main subunits: a(1), b(2) and c(9-12). The alpha and beta chains form an alternating ring which encloses part of the gamma chain. CF(1) is attached to CF(0) by a central stalk formed by the gamma and epsilon chains, while a peripheral stalk is formed by the delta and b chains.

The protein resides in the cell inner membrane. It catalyses the reaction ATP + H2O + 4 H(+)(in) = ADP + phosphate + 5 H(+)(out). Its function is as follows. Produces ATP from ADP in the presence of a proton gradient across the membrane. The catalytic sites are hosted primarily by the beta subunits. In Ehrlichia ruminantium (strain Welgevonden), this protein is ATP synthase subunit beta.